Reading from the N-terminus, the 1187-residue chain is Intraflagellar transport protein 122 homolog (1187 aa).

8 WD repeats span residues 16–54 (KVEQ…LIQP), 57–97 (GHKD…LKYT), 99–135 (NDSI…VSKH), 137–175 (VSSK…KVKI), 180–223 (GSSS…IGKD), 225–264 (SLTF…LGSI), 266–306 (EQNA…HGLY), and 459–498 (KQNT…LLFQ). The segment at 1070 to 1094 (KSWQEMSSGESQCLKLEDGPDDPED) is disordered.

Component of the IFT complex A (IFT-A) complex.

The protein localises to the cell projection. It is found in the cilium. Its subcellular location is the cytoplasm. The protein resides in the cytoskeleton. It localises to the cilium basal body. Its function is as follows. Required for cilia formation during embryonal development. Acts as a negative regulator of Shh signaling. The sequence is that of Intraflagellar transport protein 122 homolog (ift122) from Danio rerio (Zebrafish).